Consider the following 136-residue polypeptide: Holo-[acyl-carrier-protein] synthase (136 aa).

Mg(2+) is bound by residues D8 and E62.

Belongs to the P-Pant transferase superfamily. AcpS family. Mg(2+) serves as cofactor.

The protein localises to the cytoplasm. It catalyses the reaction apo-[ACP] + CoA = holo-[ACP] + adenosine 3',5'-bisphosphate + H(+). Functionally, transfers the 4'-phosphopantetheine moiety from coenzyme A to a Ser of acyl-carrier-protein. In Polynucleobacter necessarius subsp. necessarius (strain STIR1), this protein is Holo-[acyl-carrier-protein] synthase.